A 358-amino-acid polypeptide reads, in one-letter code: Fructose-bisphosphate aldolase 2, cytoplasmic (358 aa).

Arg39 provides a ligand contact to substrate. The Proton acceptor role is filled by Glu183. The Schiff-base intermediate with dihydroxyacetone-P role is filled by Lys225. Residues 266–268 (SGG) and Arg298 each bind substrate.

This sequence belongs to the class I fructose-bisphosphate aldolase family. As to quaternary structure, homotetramer.

It localises to the cytoplasm. The protein localises to the cytosol. The catalysed reaction is beta-D-fructose 1,6-bisphosphate = D-glyceraldehyde 3-phosphate + dihydroxyacetone phosphate. It functions in the pathway carbohydrate degradation; glycolysis; D-glyceraldehyde 3-phosphate and glycerone phosphate from D-glucose: step 4/4. In terms of biological role, fructose-bisphosphate aldolase that plays a key role in glycolysis and gluconeogenesis. This is Fructose-bisphosphate aldolase 2, cytoplasmic from Oryza sativa subsp. japonica (Rice).